A 503-amino-acid polypeptide reads, in one-letter code: ATP synthase subunit alpha (503 aa).

Gly-170–Thr-177 is an ATP binding site.

Belongs to the ATPase alpha/beta chains family. As to quaternary structure, F-type ATPases have 2 components, CF(1) - the catalytic core - and CF(0) - the membrane proton channel. CF(1) has five subunits: alpha(3), beta(3), gamma(1), delta(1), epsilon(1). CF(0) has three main subunits: a(1), b(2) and c(9-12). The alpha and beta chains form an alternating ring which encloses part of the gamma chain. CF(1) is attached to CF(0) by a central stalk formed by the gamma and epsilon chains, while a peripheral stalk is formed by the delta and b chains.

Its subcellular location is the cell inner membrane. It catalyses the reaction ATP + H2O + 4 H(+)(in) = ADP + phosphate + 5 H(+)(out). Produces ATP from ADP in the presence of a proton gradient across the membrane. The alpha chain is a regulatory subunit. This Thermotoga neapolitana (strain ATCC 49049 / DSM 4359 / NBRC 107923 / NS-E) protein is ATP synthase subunit alpha.